Consider the following 432-residue polypeptide: MLFEQGQQALELPECTMQKAAYYENPGLFGGYGYSKTTDTYGYSTPHQPYPPPAAASSLDTDYPGSACSIQSSAPLRAPAHKGAELNGSCMRPGTGNSQGGGGGSQPPGLNSEQQPPQPPPPPPTLPPSSPTNPGGGVPAKKPKGGPNASSSSATISKQIFPWMKESRQNSKQKNSCATAGESCEDKSPPGPASKRVRTAYTSAQLVELEKEFHFNRYLCRPRRVEMANLLNLTERQIKIWFQNRRMKYKKDQKAKGILHSPASQSPERSPPLGGAAGHVAYSGQLPPVPGLAYDAPSPPAFAKSQPNMYGLAAYTAPLSSCLPQQKRYAAPEFEPHPMASNGGGFASANLQGSPVYVGGNFVESMAPASGPVFNLGHLSHPSSASVDYSCAAQIPGNHHHGPCDPHPTYTDLSAHHSSQGRLPEAPKLTHL.

Disordered stretches follow at residues 43–62, 68–197, 253–280, and 400–432; these read YSTP…LDTD, CSIQ…SKRV, QKAK…AGHV, and HHGP…LTHL. Residues 97–106 are compositionally biased toward gly residues; it reads NSQGGGGGSQ. A compositionally biased stretch (pro residues) spans 116–131; the sequence is PPQPPPPPPTLPPSSP. Residues 148 to 158 show a composition bias toward polar residues; the sequence is NASSSSATISK. The Antp-type hexapeptide motif lies at 160–165; the sequence is IFPWMK. A DNA-binding region (homeobox) is located at residues 194–253; that stretch reads SKRVRTAYTSAQLVELEKEFHFNRYLCRPRRVEMANLLNLTERQIKIWFQNRRMKYKKDQ.

This sequence belongs to the Antp homeobox family.

The protein resides in the nucleus. In terms of biological role, sequence-specific transcription factor which is part of a developmental regulatory system that provides cells with specific positional identities on the anterior-posterior axis. This is Homeobox protein Hox-D3 (HOXD3) from Homo sapiens (Human).